We begin with the raw amino-acid sequence, 213 residues long: UPF0319 protein HAPS_0727 (213 aa).

The signal sequence occupies residues Met1–Ala21.

Belongs to the UPF0319 family.

The sequence is that of UPF0319 protein HAPS_0727 from Glaesserella parasuis serovar 5 (strain SH0165) (Haemophilus parasuis).